The chain runs to 51 residues: ATP synthase F(1) complex subunit epsilon, mitochondrial (51 aa).

3 positions are modified to N6-acetyllysine; alternate: Lys-21, Lys-32, and Lys-37. N6-succinyllysine; alternate is present on residues Lys-21, Lys-32, and Lys-37. The residue at position 44 (Lys-44) is an N6-acetyllysine.

The protein belongs to the eukaryotic ATPase epsilon family. Component of the ATP synthase complex composed at least of ATP5F1A/subunit alpha, ATP5F1B/subunit beta, ATP5MC1/subunit c (homooctomer), MT-ATP6/subunit a, MT-ATP8/subunit 8, ATP5ME/subunit e, ATP5MF/subunit f, ATP5MG/subunit g, ATP5MK/subunit k, ATP5MJ/subunit j, ATP5F1C/subunit gamma, ATP5F1D/subunit delta, ATP5F1E/subunit epsilon, ATP5PF/subunit F6, ATP5PB/subunit b, ATP5PD/subunit d, ATP5PO/subunit OSCP. ATP synthase complex consists of a soluble F(1) head domain (subunits alpha(3) and beta(3)) - the catalytic core - and a membrane F(0) domain - the membrane proton channel (subunits c, a, 8, e, f, g, k and j). These two domains are linked by a central stalk (subunits gamma, delta, and epsilon) rotating inside the F1 region and a stationary peripheral stalk (subunits F6, b, d, and OSCP). As to expression, ubiquitous.

It localises to the mitochondrion. Its subcellular location is the mitochondrion inner membrane. Subunit epsilon, of the mitochondrial membrane ATP synthase complex (F(1)F(0) ATP synthase or Complex V) that produces ATP from ADP in the presence of a proton gradient across the membrane which is generated by electron transport complexes of the respiratory chain. ATP synthase complex consist of a soluble F(1) head domain - the catalytic core - and a membrane F(1) domain - the membrane proton channel. These two domains are linked by a central stalk rotating inside the F(1) region and a stationary peripheral stalk. During catalysis, ATP synthesis in the catalytic domain of F(1) is coupled via a rotary mechanism of the central stalk subunits to proton translocation. In vivo, can only synthesize ATP although its ATP hydrolase activity can be activated artificially in vitro. May be essential for the assembly of F(1) and may play an important role in the incorporation of the hydrophobic subunit c into the F(1)-c oligomer rotor of the mitochondrial ATP synthase complex. In Homo sapiens (Human), this protein is ATP synthase F(1) complex subunit epsilon, mitochondrial.